The chain runs to 455 residues: Exodeoxyribonuclease 7 large subunit (455 aa).

This sequence belongs to the XseA family. As to quaternary structure, heterooligomer composed of large and small subunits.

It localises to the cytoplasm. It carries out the reaction Exonucleolytic cleavage in either 5'- to 3'- or 3'- to 5'-direction to yield nucleoside 5'-phosphates.. Bidirectionally degrades single-stranded DNA into large acid-insoluble oligonucleotides, which are then degraded further into small acid-soluble oligonucleotides. The chain is Exodeoxyribonuclease 7 large subunit from Oceanobacillus iheyensis (strain DSM 14371 / CIP 107618 / JCM 11309 / KCTC 3954 / HTE831).